A 452-amino-acid polypeptide reads, in one-letter code: MCRVFMIAGTHSGAGKTTLSLGIMGVLSKKYNVRPFKVGPDYIDTAYHRYVTRNFSVNLDLFMLGEENLKNLFYKNASRADVSIIEGVMGLYDGIDTTSRGSSAHIAKLVNVPVVLVVDASSMAASVSALIMGYIYYDKDVDIRGVILNKVGSERHYTLLKEVIERDLNIEVFGYLPKDVELELPERHLGLLPVYETENLDKKLEKLYGYIENCIDVEKLMNLTVKPPDFIEKEDRVLKEKKVKIAYAYDEAFNFYYKESLETLEEMGAHLIPFSPLDDERLPEGTEGLYIGGGFPEVFAKRLSENESMLREIKEAVEKGMPVYAECGGLMYLSKGIRDLEGNRYSMVGVYDFEVVMTKKLQRFGYVEAEITMDNVLFKKGERIKGHEFHYSRIEGFSQNASYIVNRPGKEEKWECGFVHKNCLASFVHINLYTYKEGVKRFLDRCSSFGRK.

Residues 244-437 (KIAYAYDEAF…VHINLYTYKE (194 aa)) form the GATase cobBQ-type domain. Residue Cys-327 is the Nucleophile of the active site.

Belongs to the CobB/CbiA family. Mg(2+) serves as cofactor.

The catalysed reaction is cob(II)yrinate + 2 L-glutamine + 2 ATP + 2 H2O = cob(II)yrinate a,c diamide + 2 L-glutamate + 2 ADP + 2 phosphate + 2 H(+). It functions in the pathway cofactor biosynthesis; adenosylcobalamin biosynthesis; cob(II)yrinate a,c-diamide from sirohydrochlorin (anaerobic route): step 10/10. In terms of biological role, catalyzes the ATP-dependent amidation of the two carboxylate groups at positions a and c of cobyrinate, using either L-glutamine or ammonia as the nitrogen source. In Caldanaerobacter subterraneus subsp. tengcongensis (strain DSM 15242 / JCM 11007 / NBRC 100824 / MB4) (Thermoanaerobacter tengcongensis), this protein is Cobyrinate a,c-diamide synthase.